We begin with the raw amino-acid sequence, 296 residues long: Isoprenyl transferase (296 aa).

Residues 1–11 show a composition bias toward basic residues; sequence MATERNRRRKG. A disordered region spans residues 1 to 29; sequence MATERNRRRKGSYPQLPPAPDDYPTFPDK. Aspartate 76 is a catalytic residue. Aspartate 76 is a binding site for Mg(2+). Substrate is bound by residues 77–80, tryptophan 81, arginine 89, histidine 93, and 121–123; these read GNGR and STE. Asparagine 124 serves as the catalytic Proton acceptor. Substrate contacts are provided by residues tryptophan 125, arginine 127, arginine 244, and 250–252; that span reads RAS. Glutamate 263 contributes to the Mg(2+) binding site.

This sequence belongs to the UPP synthase family. Homodimer. It depends on Mg(2+) as a cofactor.

Catalyzes the condensation of isopentenyl diphosphate (IPP) with allylic pyrophosphates generating different type of terpenoids. This chain is Isoprenyl transferase, found in Mycolicibacterium parafortuitum (Mycobacterium parafortuitum).